We begin with the raw amino-acid sequence, 424 residues long: UDP-glycosyltransferase 76H1 (424 aa).

Residues serine 248, 306–307 (WA), 324–332 (HCGWNSTIE), and 346–349 (FADQ) contribute to the UDP-alpha-D-glucose site.

It belongs to the UDP-glycosyltransferase family.

May glycosylate diterpenes or flavonols in leaves. The polypeptide is UDP-glycosyltransferase 76H1 (Stevia rebaudiana (Stevia)).